Reading from the N-terminus, the 368-residue chain is 1-deoxy-D-xylulose 5-phosphate reductoisomerase (368 aa).

The NADPH site is built by Thr-7, Gly-8, Ser-9, Ile-10, Gly-31, Lys-32, Asn-33, and Asn-113. 1-deoxy-D-xylulose 5-phosphate is bound at residue Lys-114. Glu-115 lines the NADPH pocket. Mn(2+) is bound at residue Asp-133. The 1-deoxy-D-xylulose 5-phosphate site is built by Ser-134, Glu-135, Ser-158, and His-181. Glu-135 serves as a coordination point for Mn(2+). Residue Gly-187 participates in NADPH binding. Residues Ser-194, Asn-199, Lys-200, and Glu-203 each contribute to the 1-deoxy-D-xylulose 5-phosphate site. Position 203 (Glu-203) interacts with Mn(2+).

The protein belongs to the DXR family. Mg(2+) serves as cofactor. It depends on Mn(2+) as a cofactor.

It catalyses the reaction 2-C-methyl-D-erythritol 4-phosphate + NADP(+) = 1-deoxy-D-xylulose 5-phosphate + NADPH + H(+). The protein operates within isoprenoid biosynthesis; isopentenyl diphosphate biosynthesis via DXP pathway; isopentenyl diphosphate from 1-deoxy-D-xylulose 5-phosphate: step 1/6. Functionally, catalyzes the NADPH-dependent rearrangement and reduction of 1-deoxy-D-xylulose-5-phosphate (DXP) to 2-C-methyl-D-erythritol 4-phosphate (MEP). This is 1-deoxy-D-xylulose 5-phosphate reductoisomerase from Helicobacter pylori (strain Shi470).